An 805-amino-acid polypeptide reads, in one-letter code: Hypoxia-inducible factor 1-alpha (805 aa).

Positions 1–26 (MEGSVVVSEKKRISSERRKEKSRDAA) are disordered. Residues 8–26 (SEKKRISSERRKEKSRDAA) show a composition bias toward basic and acidic residues. A bHLH domain is found at 17–70 (RRKEKSRDAARCRRSNESEVFYELSHELPLPHNVSSHLDKASIMRLDHQLPAVE). PAS domains follow at residues 85 to 157 (DKQL…PAKK) and 229 to 300 (PHPS…TKGQ). One can recognise a PAC domain in the interval 303 to 346 (TGQYRMLAKKGGYVWVETQATVIYNSKNSQPQCIVCVNYVLSEV). Residues proline 404 and proline 560 each carry the 4-hydroxyproline modification. Positions 628 to 669 (KESTSAPVSPYNGNRSRTSSPVRPAKAVVDKTEKSRPGTPNL) are disordered. Polar residues predominate over residues 629-648 (ESTSAPVSPYNGNRSRTSSP). Asparagine 782 is subject to (3S)-3-hydroxyasparagine.

In terms of assembly, efficient DNA binding requires heterodimerization of an alpha and a beta/ARNT subunit. In terms of processing, in normoxia, is hydroxylated on Pro-404 and Pro-560. The hydroxylated prolines promote interaction with VHL, initiating rapid ubiquitination and subsequent proteasomal degradation. Under hypoxia, proline hydroxylation is impaired and ubiquitination is attenuated, resulting in stabilization. In normoxia, is hydroxylated on Asn-782, thus abrogating interaction with CREBBP and EP300 and preventing transcriptional activation. Post-translationally, the iron and 2-oxoglutarate dependent 3-hydroxylation of asparagine is (S) stereospecific within HIF CTAD domains.

It is found in the cytoplasm. The protein localises to the nucleus. It localises to the nucleus speckle. With respect to regulation, induced by reactive oxygen species (ROS). Its function is as follows. Functions as a master transcriptional regulator of the adaptive response to hypoxia. Under hypoxic conditions, activates the transcription of over 40 genes, including erythropoietin, glucose transporters, glycolytic enzymes, vascular endothelial growth factor, HILPDA, and other genes whose protein products increase oxygen delivery or facilitate metabolic adaptation to hypoxia. Plays an essential role in embryonic vascularization, tumor angiogenesis and pathophysiology of ischemic disease. This Xenopus laevis (African clawed frog) protein is Hypoxia-inducible factor 1-alpha (hif1a).